We begin with the raw amino-acid sequence, 138 residues long: Small ribosomal subunit protein uS11c (138 aa).

The segment at 1–24 is disordered; the sequence is MAKAIPRSGSRRSGRIGSRKSTRR. Positions 9-24 are enriched in basic residues; it reads GSRRSGRIGSRKSTRR.

Belongs to the universal ribosomal protein uS11 family. As to quaternary structure, part of the 30S ribosomal subunit.

Its subcellular location is the plastid. The protein resides in the chloroplast. The sequence is that of Small ribosomal subunit protein uS11c from Panax ginseng (Korean ginseng).